A 196-amino-acid polypeptide reads, in one-letter code: Putative NADH dehydrogenase/NAD(P)H nitroreductase Pnuc_0932 (196 aa).

This sequence belongs to the nitroreductase family. HadB/RutE subfamily. Requires FMN as cofactor.

The polypeptide is Putative NADH dehydrogenase/NAD(P)H nitroreductase Pnuc_0932 (Polynucleobacter asymbioticus (strain DSM 18221 / CIP 109841 / QLW-P1DMWA-1) (Polynucleobacter necessarius subsp. asymbioticus)).